The primary structure comprises 128 residues: HFNAPSHIRRKIMSSPLSKELRQKYNVRSMPIRKDDEVQVVRGHYKGQQIGKVVQVYRKKYVIYIERVQREKANGTTVHVGIHPSKVVITRLKLDKDRKKILERKAKSRQVGKEKGKYKEETIEKMQE.

Residues 105–128 (KAKSRQVGKEKGKYKEETIEKMQE) are disordered.

Belongs to the universal ribosomal protein uL24 family. As to quaternary structure, component of the large ribosomal subunit.

It localises to the cytoplasm. Its function is as follows. Component of the large ribosomal subunit. The ribosome is a large ribonucleoprotein complex responsible for the synthesis of proteins in the cell. The sequence is that of Large ribosomal subunit protein uL24 (RPL26) from Gallus gallus (Chicken).